Here is a 321-residue protein sequence, read N- to C-terminus: Probable arabinan endo-1,5-alpha-L-arabinosidase A (321 aa).

The first 19 residues, 1–19, serve as a signal peptide directing secretion; it reads MYRLLSVASVPLLASLVHG. D34 acts as the Proton acceptor in catalysis. The active-site Proton donor is E200. N-linked (GlcNAc...) asparagine glycosylation is present at N295.

The protein belongs to the glycosyl hydrolase 43 family.

It localises to the secreted. The catalysed reaction is Endohydrolysis of (1-&gt;5)-alpha-arabinofuranosidic linkages in (1-&gt;5)-arabinans.. Its pathway is glycan metabolism; L-arabinan degradation. Functionally, endo-1,5-alpha-L-arabinanase involved in degradation of pectin. Its preferred substrate is linear 1,5-alpha-L-arabinan. In Aspergillus niger (strain ATCC MYA-4892 / CBS 513.88 / FGSC A1513), this protein is Probable arabinan endo-1,5-alpha-L-arabinosidase A (abnA).